The primary structure comprises 921 residues: Short transient receptor potential channel 3 (921 aa).

Residues 1-73 (MSTKVRKCKE…PPFSHGPDLS (73 aa)) form a disordered region. At 1 to 459 (MSTKVRKCKE…KILRSPFMKF (459 aa)) the chain is on the cytoplasmic side. Residues 19–31 (PEEEEDEGEDEGA) show a composition bias toward acidic residues. ANK repeat units follow at residues 111–140 (AEEERFLDAAEYGNIPVVRKMLEESKTLNV), 146–175 (MGQNALQLAVGNEHLEVTELLLKKENLARI), 177–203 (DALLLAISKGYVRIVEAILNHPGFAAS), and 232–261 (PDITPIILAAHCQKYEVVHMLLMKGARIER). E158 serves as a coordination point for Ca(2+). The helical transmembrane segment at 460 to 477 (VAHAASFIIFLGLLVFNA) threads the bilayer. The Extracellular portion of the chain corresponds to 478 to 508 (SDRFEGITTLPNITVTDYPKQIFRVKTTQFT). N489 carries an N-linked (GlcNAc...) asparagine glycan. A helical transmembrane segment spans residues 509–527 (WTEMLIMVWVLGMMWSECK). Positions 525, 528, and 543 each coordinate Ca(2+). Residues 528–540 (ELWLEGPREYILQ) lie on the Cytoplasmic side of the membrane. The chain crosses the membrane as a helical span at residues 541 to 562 (LWNVLDFGMLSIFIAAFTARFL). Residues 563 to 606 (AFLQATKAQQYVDSYVQESDLSEVTLPPEIQYFTYARDKWLPSD) lie on the Extracellular side of the membrane. A helical transmembrane segment spans residues 607–630 (PQIISEGLYAIAVVLSFSRIAYIL). Residues 631-649 (PANESFGPLQISLGRTVKD) are Cytoplasmic-facing. Residues 634–663 (ESFGPLQISLGRTVKDIFKFMVLFIMVFFA) form an ANK 5 repeat. A helical transmembrane segment spans residues 650–673 (IFKFMVLFIMVFFAFMIGMFILYS). The Extracellular segment spans residues 674–713 (YYLGAKVNAAFTTVEESFKTLFWSIFGLSEVTSVVLKYDH). The helical transmembrane segment at 714-739 (KFIENIGYVLYGIYNVTMVVVLLNML) threads the bilayer. Residues 740-921 (IAMINSSYQE…KLNPSMLRCE (182 aa)) lie on the Cytoplasmic side of the membrane. The segment at 850 to 870 (QIMKRLIKRYVLKAQVDKEND) is binds to IP3R3. E871, E874, E876, and D883 together coordinate Ca(2+).

Belongs to the transient receptor (TC 1.A.4) family. STrpC subfamily. TRPC3 sub-subfamily. As to quaternary structure, homotetramer. Interacts with ITPR1. Interacts with ITPR3. Interacts with MX1. Interacts with RNF24. Interacts with JPH2; the interaction is involved in maintaining Ca(2+) homeostasis in skeletal muscle and is mediated by JPH2 'Ser-165' phosphorylation. In terms of assembly, interacts with isoform short of TRPC1. Expressed predominantly in brain and at much lower levels in ovary, colon, small intestine, lung, prostate, placenta and testis.

The protein localises to the cell membrane. It carries out the reaction Ca(2+)(in) = Ca(2+)(out). Its activity is regulated as follows. Activated by diacylglycerol (DAG) in a membrane-delimited fashion, independently of protein kinase C. Activated by inositol 1,4,5-triphosphate receptors (ITPR) with bound IP3. May be activated by internal calcium store depletion. Inhibited by intracellular Ca(2+). Functionally, forms a receptor-activated non-selective calcium permeant cation channel. Forms a receptor-activated non-selective calcium permeant cation channel. May be operated by a phosphatidylinositol second messenger system activated by receptor tyrosine kinases or G-protein coupled receptors. This is Short transient receptor potential channel 3 (TRPC3) from Homo sapiens (Human).